Here is a 774-residue protein sequence, read N- to C-terminus: Neprilysin-2 (774 aa).

At 1–20 the chain is on the cytoplasmic side; sequence MQTVIQNPNWWRRRNKLEKS. A helical; Signal-anchor for type II membrane protein transmembrane segment spans residues 21–41; sequence LLVSLGIMFVVLATGFGLWIG. The Extracellular portion of the chain corresponds to 42-774; it reads KVLRTSPPSN…MNPVQKCEVW (733 aa). A disordered region spans residues 50–79; the sequence is SNPQATALHGDSTTINQVPTGTASKGKSGD. Polar residues predominate over residues 60–74; that stretch reads DSTTINQVPTGTASK. The Peptidase M13 domain occupies 83 to 774; it reads VCLTQECIHT…MNPVQKCEVW (692 aa). Cystine bridges form between Cys84–Cys89, Cys107–Cys759, Cys115–Cys719, Cys171–Cys424, and Cys646–Cys771. N-linked (GlcNAc...) asparagine glycans are attached at residues Asn173, Asn239, Asn264, Asn305, Asn315, Asn358, and Asn554. His609 lines the Zn(2+) pocket. Glu610 is a catalytic residue. His613 is a Zn(2+) binding site. Asn653 is a glycosylation site (N-linked (GlcNAc...) asparagine). A Zn(2+)-binding site is contributed by Glu671. Asp675 serves as the catalytic Proton donor.

Belongs to the peptidase M13 family. Zn(2+) serves as cofactor. In terms of processing, N-glycosylated. The soluble form is probably produced by proteolytic cleavage. As to expression, detected in the stellate cells in the main segment and the bar-shaped cells in the initial segment of male and female Malpighian tubules (at protein level). Expressed in the spermatheca (at protein level). Expressed in the somatic cyst cells of the testes, with increased expression at the tail end of elongating cysts. Expressed in the ovaries with strong expression in the posterior polar cells and in border cells of stage 8, 9, and 10 follicles. In adults and third-instar larvae, expressed in the brain, ventral ganglion, and stellate cells. Also expressed in the foregut and the imaginal disks (eye, antennal and leg) of third-instar larvae. In stage 17 embryos, expressed in the tracheal system, foregut, hindgut and epidermis. Also expressed in the stellate cell progenitors of the caudal visceral mesoderm in embryos.

It localises to the cell membrane. It is found in the secreted. It catalyses the reaction Preferential cleavage of polypeptides between hydrophobic residues, particularly with Phe or Tyr at P1'.. Its function is as follows. Metalloendoprotease which cleaves peptides such as tachykinin peptide TK-2 at the amino side of hydrophobic residues. Functions in female fertility, embryogenesis and memory formation. Required in females for normal patterns of egg laying, probably due to its function in sperm retention and preventing sperm displacement by rival ejaculates. Also required for normal patterns of hatching due to its important role in early embryonic development. Required in the dorsal paired medial neurons for the proper formation of middle-term memory. Also required in the mushroom body neurons where it functions redundantly with neprilysins Nep3 and Nep4 in normal long-term memory formation. This Drosophila melanogaster (Fruit fly) protein is Neprilysin-2.